We begin with the raw amino-acid sequence, 232 residues long: Ubiquinone biosynthesis O-methyltransferase (232 aa).

Residues Arg36, Gly55, Asp76, and Leu120 each contribute to the S-adenosyl-L-methionine site.

It belongs to the methyltransferase superfamily. UbiG/COQ3 family.

The catalysed reaction is a 3-demethylubiquinol + S-adenosyl-L-methionine = a ubiquinol + S-adenosyl-L-homocysteine + H(+). The enzyme catalyses a 3-(all-trans-polyprenyl)benzene-1,2-diol + S-adenosyl-L-methionine = a 2-methoxy-6-(all-trans-polyprenyl)phenol + S-adenosyl-L-homocysteine + H(+). It functions in the pathway cofactor biosynthesis; ubiquinone biosynthesis. In terms of biological role, O-methyltransferase that catalyzes the 2 O-methylation steps in the ubiquinone biosynthetic pathway. The polypeptide is Ubiquinone biosynthesis O-methyltransferase (Pseudomonas fluorescens (strain SBW25)).